Here is a 255-residue protein sequence, read N- to C-terminus: Imidazole glycerol phosphate synthase subunit HisF (255 aa).

Active-site residues include D11 and D130.

This sequence belongs to the HisA/HisF family. In terms of assembly, heterodimer of HisH and HisF.

It localises to the cytoplasm. The enzyme catalyses 5-[(5-phospho-1-deoxy-D-ribulos-1-ylimino)methylamino]-1-(5-phospho-beta-D-ribosyl)imidazole-4-carboxamide + L-glutamine = D-erythro-1-(imidazol-4-yl)glycerol 3-phosphate + 5-amino-1-(5-phospho-beta-D-ribosyl)imidazole-4-carboxamide + L-glutamate + H(+). The protein operates within amino-acid biosynthesis; L-histidine biosynthesis; L-histidine from 5-phospho-alpha-D-ribose 1-diphosphate: step 5/9. In terms of biological role, IGPS catalyzes the conversion of PRFAR and glutamine to IGP, AICAR and glutamate. The HisF subunit catalyzes the cyclization activity that produces IGP and AICAR from PRFAR using the ammonia provided by the HisH subunit. This chain is Imidazole glycerol phosphate synthase subunit HisF, found in Maricaulis maris (strain MCS10) (Caulobacter maris).